The chain runs to 369 residues: Homoserine O-acetyltransferase (369 aa).

An AB hydrolase-1 domain is found at 44–350 (NAILVAHAWT…AYGHDAFLLE (307 aa)). The active-site Nucleophile is serine 150. Substrate is bound at residue arginine 217. Active-site residues include aspartate 311 and histidine 344. Position 345 (aspartate 345) interacts with substrate.

The protein belongs to the AB hydrolase superfamily. MetX family. As to quaternary structure, homodimer.

Its subcellular location is the cytoplasm. It catalyses the reaction L-homoserine + acetyl-CoA = O-acetyl-L-homoserine + CoA. The protein operates within amino-acid biosynthesis; L-methionine biosynthesis via de novo pathway; O-acetyl-L-homoserine from L-homoserine: step 1/1. Its function is as follows. Transfers an acetyl group from acetyl-CoA to L-homoserine, forming acetyl-L-homoserine. In Geobacter metallireducens (strain ATCC 53774 / DSM 7210 / GS-15), this protein is Homoserine O-acetyltransferase.